The chain runs to 444 residues: Argininosuccinate synthase (444 aa).

Residues 18–26 (AFSGGLDTS) and Ala44 contribute to the ATP site. An L-citrulline-binding site is contributed by Tyr100. Residues Gly130 and Thr132 each coordinate ATP. L-aspartate contacts are provided by Thr132, Asn136, and Asp137. Asn136 is a binding site for L-citrulline. ATP is bound at residue Asp137. Arg140 and Ser193 together coordinate L-citrulline. Asp195 contributes to the ATP binding site. Thr202, Glu204, and Glu281 together coordinate L-citrulline.

Belongs to the argininosuccinate synthase family. Type 2 subfamily. As to quaternary structure, homotetramer.

Its subcellular location is the cytoplasm. It catalyses the reaction L-citrulline + L-aspartate + ATP = 2-(N(omega)-L-arginino)succinate + AMP + diphosphate + H(+). It participates in amino-acid biosynthesis; L-arginine biosynthesis; L-arginine from L-ornithine and carbamoyl phosphate: step 2/3. This chain is Argininosuccinate synthase, found in Haemophilus influenzae (strain PittEE).